The primary structure comprises 322 residues: Fructose-1,6-bisphosphatase class 1 (322 aa).

Mg(2+)-binding residues include Glu-84, Asp-103, Leu-105, and Asp-106. Residues 106-109, Asn-198, and Lys-264 each bind substrate; that span reads DGSS. Glu-270 serves as a coordination point for Mg(2+).

Belongs to the FBPase class 1 family. As to quaternary structure, homotetramer. Mg(2+) serves as cofactor.

The protein localises to the cytoplasm. It carries out the reaction beta-D-fructose 1,6-bisphosphate + H2O = beta-D-fructose 6-phosphate + phosphate. It participates in carbohydrate biosynthesis; gluconeogenesis. This Colwellia psychrerythraea (strain 34H / ATCC BAA-681) (Vibrio psychroerythus) protein is Fructose-1,6-bisphosphatase class 1.